The chain runs to 116 residues: MKKKLNTKKENNNFYILVNDLFLKIEDNLNLYENEIDIDYEIQDYVMTITFSNKTLIIINKQEPLQQIWLATMQNGYHFDYKNNQWICNRSNKNFWEIFENACSIQSNKDLIFCKK.

The protein belongs to the frataxin family.

Its function is as follows. Involved in iron-sulfur (Fe-S) cluster assembly. May act as a regulator of Fe-S biogenesis. The chain is Iron-sulfur cluster assembly protein CyaY from Buchnera aphidicola subsp. Acyrthosiphon pisum (strain APS) (Acyrthosiphon pisum symbiotic bacterium).